An 853-amino-acid chain; its full sequence is DNA mismatch repair protein MutS (853 aa).

Residue 614–621 (GPNMGGKS) participates in ATP binding.

It belongs to the DNA mismatch repair MutS family.

This protein is involved in the repair of mismatches in DNA. It is possible that it carries out the mismatch recognition step. This protein has a weak ATPase activity. This is DNA mismatch repair protein MutS from Shigella flexneri serotype 5b (strain 8401).